A 312-amino-acid polypeptide reads, in one-letter code: Homoserine O-acetyltransferase (312 aa).

The active-site Acyl-thioester intermediate is cysteine 142. 2 residues coordinate substrate: lysine 163 and serine 192. The Proton acceptor role is filled by histidine 235. The active site involves glutamate 237. Arginine 249 is a substrate binding site.

The protein belongs to the MetA family.

Its subcellular location is the cytoplasm. The enzyme catalyses L-homoserine + acetyl-CoA = O-acetyl-L-homoserine + CoA. Its pathway is amino-acid biosynthesis; L-methionine biosynthesis via de novo pathway; O-acetyl-L-homoserine from L-homoserine: step 1/1. Transfers an acetyl group from acetyl-CoA to L-homoserine, forming acetyl-L-homoserine. In Ruegeria sp. (strain TM1040) (Silicibacter sp.), this protein is Homoserine O-acetyltransferase.